A 215-amino-acid chain; its full sequence is Probable phosphoglycerate mutase GpmB (215 aa).

Substrate contacts are provided by residues 8–15 (RHGETQWN), 21–22 (QG), R58, K60, 82–85 (ELDM), 104–105 (RR), and 151–152 (GI). H9 (tele-phosphohistidine intermediate) is an active-site residue. E82 functions as the Proton donor/acceptor in the catalytic mechanism.

The protein belongs to the phosphoglycerate mutase family. GpmB subfamily.

The catalysed reaction is (2R)-2-phosphoglycerate = (2R)-3-phosphoglycerate. It participates in carbohydrate degradation; glycolysis; pyruvate from D-glyceraldehyde 3-phosphate: step 3/5. The polypeptide is Probable phosphoglycerate mutase GpmB (Salmonella choleraesuis (strain SC-B67)).